Here is a 143-residue protein sequence, read N- to C-terminus: Nucleoside diphosphate kinase (143 aa).

ATP contacts are provided by lysine 11, phenylalanine 59, arginine 87, threonine 93, arginine 104, and asparagine 114. Histidine 117 (pros-phosphohistidine intermediate) is an active-site residue.

The protein belongs to the NDK family. In terms of assembly, homotetramer. The cofactor is Mg(2+).

The protein localises to the cytoplasm. The enzyme catalyses a 2'-deoxyribonucleoside 5'-diphosphate + ATP = a 2'-deoxyribonucleoside 5'-triphosphate + ADP. The catalysed reaction is a ribonucleoside 5'-diphosphate + ATP = a ribonucleoside 5'-triphosphate + ADP. Major role in the synthesis of nucleoside triphosphates other than ATP. The ATP gamma phosphate is transferred to the NDP beta phosphate via a ping-pong mechanism, using a phosphorylated active-site intermediate. This is Nucleoside diphosphate kinase from Citrobacter koseri (strain ATCC BAA-895 / CDC 4225-83 / SGSC4696).